Consider the following 255-residue polypeptide: Pyrroloquinoline-quinone synthase (255 aa).

The protein belongs to the PqqC family.

It catalyses the reaction 6-(2-amino-2-carboxyethyl)-7,8-dioxo-1,2,3,4,7,8-hexahydroquinoline-2,4-dicarboxylate + 3 O2 = pyrroloquinoline quinone + 2 H2O2 + 2 H2O + H(+). It participates in cofactor biosynthesis; pyrroloquinoline quinone biosynthesis. Functionally, ring cyclization and eight-electron oxidation of 3a-(2-amino-2-carboxyethyl)-4,5-dioxo-4,5,6,7,8,9-hexahydroquinoline-7,9-dicarboxylic-acid to PQQ. This Cereibacter sphaeroides (strain ATCC 17029 / ATH 2.4.9) (Rhodobacter sphaeroides) protein is Pyrroloquinoline-quinone synthase.